The chain runs to 266 residues: 3-methyl-2-oxobutanoate hydroxymethyltransferase (266 aa).

Mg(2+) is bound by residues aspartate 46 and aspartate 85. 3-methyl-2-oxobutanoate contacts are provided by residues 46 to 47 (DS), aspartate 85, and lysine 115. A Mg(2+)-binding site is contributed by glutamate 117. Residue glutamate 183 is the Proton acceptor of the active site.

Belongs to the PanB family. As to quaternary structure, homodecamer; pentamer of dimers. It depends on Mg(2+) as a cofactor.

It localises to the cytoplasm. It catalyses the reaction 3-methyl-2-oxobutanoate + (6R)-5,10-methylene-5,6,7,8-tetrahydrofolate + H2O = 2-dehydropantoate + (6S)-5,6,7,8-tetrahydrofolate. It participates in cofactor biosynthesis; (R)-pantothenate biosynthesis; (R)-pantoate from 3-methyl-2-oxobutanoate: step 1/2. Functionally, catalyzes the reversible reaction in which hydroxymethyl group from 5,10-methylenetetrahydrofolate is transferred onto alpha-ketoisovalerate to form ketopantoate. This chain is 3-methyl-2-oxobutanoate hydroxymethyltransferase, found in Trichlorobacter lovleyi (strain ATCC BAA-1151 / DSM 17278 / SZ) (Geobacter lovleyi).